The sequence spans 101 residues: NAD(P)H-quinone oxidoreductase subunit 4L, chloroplastic (101 aa).

The next 3 membrane-spanning stretches (helical) occupy residues 2–22 (ILEHVLVLSAYLFSIGIYGLI), 32–52 (MCLELILNAVNINFVTFSDFF), and 61–81 (IFSIFVIAIAAAEAAIGPAIL).

The protein belongs to the complex I subunit 4L family. In terms of assembly, NDH is composed of at least 16 different subunits, 5 of which are encoded in the nucleus.

The protein resides in the plastid. It is found in the chloroplast thylakoid membrane. The catalysed reaction is a plastoquinone + NADH + (n+1) H(+)(in) = a plastoquinol + NAD(+) + n H(+)(out). It catalyses the reaction a plastoquinone + NADPH + (n+1) H(+)(in) = a plastoquinol + NADP(+) + n H(+)(out). Its function is as follows. NDH shuttles electrons from NAD(P)H:plastoquinone, via FMN and iron-sulfur (Fe-S) centers, to quinones in the photosynthetic chain and possibly in a chloroplast respiratory chain. The immediate electron acceptor for the enzyme in this species is believed to be plastoquinone. Couples the redox reaction to proton translocation, and thus conserves the redox energy in a proton gradient. The polypeptide is NAD(P)H-quinone oxidoreductase subunit 4L, chloroplastic (Platanus occidentalis (Sycamore)).